The primary structure comprises 119 residues: Holo-[acyl-carrier-protein] synthase (119 aa).

The Mg(2+) site is built by Asp-7 and Glu-53.

The protein belongs to the P-Pant transferase superfamily. AcpS family. Mg(2+) is required as a cofactor.

The protein resides in the cytoplasm. The catalysed reaction is apo-[ACP] + CoA = holo-[ACP] + adenosine 3',5'-bisphosphate + H(+). Functionally, transfers the 4'-phosphopantetheine moiety from coenzyme A to a Ser of acyl-carrier-protein. The polypeptide is Holo-[acyl-carrier-protein] synthase (Dehalococcoides mccartyi (strain ATCC BAA-2266 / KCTC 15142 / 195) (Dehalococcoides ethenogenes (strain 195))).